The sequence spans 287 residues: Heavy metal-associated isoprenylated plant protein 4 (287 aa).

HMA domains follow at residues 14-80 (IITA…VELI) and 112-176 (IRTT…KHAE). A metal cation is bound by residues Cys-25, Cys-28, Cys-123, and Cys-126. The stretch at 179–235 (SSKTEEEKKKEEEDKKKKEEEDKKKKEDEKKKEEEKKKEEENKKKEGEKKKEEVKVE) forms a coiled coil. The interval 181-232 (KTEEEKKKEEEDKKKKEEEDKKKKEDEKKKEEEKKKEEENKKKEGEKKKEEV) is disordered. A Cysteine methyl ester modification is found at Cys-284. Residue Cys-284 is the site of S-farnesyl cysteine attachment. Positions 285–287 (RIV) are cleaved as a propeptide — removed in mature form.

Belongs to the HIPP family.

Functionally, heavy-metal-binding protein. The chain is Heavy metal-associated isoprenylated plant protein 4 from Arabidopsis thaliana (Mouse-ear cress).